The following is a 367-amino-acid chain: 2-aminoethylphosphonate--pyruvate transaminase (367 aa).

K194 bears the N6-(pyridoxal phosphate)lysine mark.

This sequence belongs to the class-V pyridoxal-phosphate-dependent aminotransferase family. PhnW subfamily. As to quaternary structure, homodimer. Pyridoxal 5'-phosphate is required as a cofactor.

It carries out the reaction (2-aminoethyl)phosphonate + pyruvate = phosphonoacetaldehyde + L-alanine. Its function is as follows. Involved in phosphonate degradation. The protein is 2-aminoethylphosphonate--pyruvate transaminase of Salmonella gallinarum (strain 287/91 / NCTC 13346).